We begin with the raw amino-acid sequence, 400 residues long: Phosphoglycerate kinase (400 aa).

Substrate-binding positions include 22–24 (DFN), arginine 38, 61–64 (HLGR), arginine 119, and arginine 152. ATP contacts are provided by residues lysine 205, glycine 296, glutamate 327, and 353 to 356 (GGDT).

It belongs to the phosphoglycerate kinase family. In terms of assembly, monomer.

It is found in the cytoplasm. The enzyme catalyses (2R)-3-phosphoglycerate + ATP = (2R)-3-phospho-glyceroyl phosphate + ADP. Its pathway is carbohydrate degradation; glycolysis; pyruvate from D-glyceraldehyde 3-phosphate: step 2/5. This chain is Phosphoglycerate kinase, found in Campylobacter jejuni subsp. doylei (strain ATCC BAA-1458 / RM4099 / 269.97).